The following is a 431-amino-acid chain: Protein prenyltransferase alpha subunit repeat-containing protein 1-B (431 aa).

PFTA repeat units follow at residues 85–118 (ELIDVTCTLLLLNPDFTTAWNVRKELIQSGTLNP), 120–153 (KDLQLGKLALTKFPKSPETWIHRRWVLQRVVQEL), 178–211 (EEMHVCYEAAGRYPSNYNSWSHRIWVIQHLGNLN), 217–250 (DELSSTKHWVSMHVSDHSGFHYRQFLLKSLLCKT), and 293–326 (EEMKLNRELLDSYPGHETLWCHRRQIFKLIHQLL). The interval 363–383 (PMDVDGMSDPNKQGYTQETKR) is disordered. A PFTA 6 repeat occupies 394-431 (SLDSELRFINCVLTNCCSPEQSRFAASYRKWLLSLQGY).

Belongs to the protein prenyltransferase subunit alpha family.

In Xenopus laevis (African clawed frog), this protein is Protein prenyltransferase alpha subunit repeat-containing protein 1-B (ptar1-b).